The following is a 506-amino-acid chain: Putative transporter SVOPL (506 aa).

Transmembrane regions (helical) follow at residues 57–77, 104–124, 133–153, 190–210, 220–240, 297–317, 362–382, 397–417, 444–464, and 472–492; these read SIGF…ANIV, ALVS…CGYI, VVFG…FSTS, LLPL…VLGM, WMIR…MFIP, TSLL…GSVL, LISC…LNIV, FFFM…LLFL, IGMG…PFIA, and VILA…GVFF.

Belongs to the major facilitator superfamily.

It is found in the membrane. The protein is Putative transporter SVOPL (svopl) of Danio rerio (Zebrafish).